We begin with the raw amino-acid sequence, 230 residues long: Cysteine S-methyltransferase OspZ (230 aa).

Positions 49–52 are interaction with host proteins TAB2, TAB3 and ZRANB3; it reads GITR. A92, S98, R107, Q111, Y204, and E208 together coordinate S-adenosyl-L-methionine.

The protein belongs to the NleE/OspZ family. In terms of assembly, monomer.

It localises to the secreted. The protein localises to the host cytoplasm. The protein resides in the host nucleus. The catalysed reaction is L-cysteinyl-[protein] + S-adenosyl-L-methionine = S-methyl-L-cysteinyl-[protein] + S-adenosyl-L-homocysteine + H(+). Functionally, cysteine methyltransferase effector that inhibits host cell NF-kappa-B activation by preventing nuclear translocation of host protein RELA/p65. Acts by mediating cysteine methylation of host proteins TAB2 and TAB3: methylation of a conserved cysteine residue of the RanBP2-type zinc finger (NZF) of TAB2 and TAB3 disrupts zinc-binding, thereby inactivating the ubiquitin chain-binding activity of TAB2 and TAB3, leading to NF-kappa-B inactivation. Also mediates cysteine methylation of host protein ZRANB3, inactivating its ability to bind ubiquitin chains. This Shigella flexneri protein is Cysteine S-methyltransferase OspZ.